Consider the following 289-residue polypeptide: Phosphatidylglycerol--prolipoprotein diacylglyceryl transferase (289 aa).

The next 7 helical transmembrane spans lie at 17–37 (LAVRWYGLMYLLGFACFILLG), 57–77 (MLFYGVLGVIVGGRLGHIFFY), 89–109 (IFAVWQGGMSFHGGFLGVIAA), 121–141 (WLVVTDFIAPLVPLGLGAGRI), 174–194 (QLYEFALEGLAFFTLMWIYSA), 200–220 (GAVSGMFLIGYGVFRSFAEFF), and 235–255 (ISMGQWLSLPMILAGVIMLVW). Position 140 (Arg140) interacts with a 1,2-diacyl-sn-glycero-3-phospho-(1'-sn-glycerol).

It belongs to the Lgt family.

It localises to the cell inner membrane. The enzyme catalyses L-cysteinyl-[prolipoprotein] + a 1,2-diacyl-sn-glycero-3-phospho-(1'-sn-glycerol) = an S-1,2-diacyl-sn-glyceryl-L-cysteinyl-[prolipoprotein] + sn-glycerol 1-phosphate + H(+). It functions in the pathway protein modification; lipoprotein biosynthesis (diacylglyceryl transfer). Catalyzes the transfer of the diacylglyceryl group from phosphatidylglycerol to the sulfhydryl group of the N-terminal cysteine of a prolipoprotein, the first step in the formation of mature lipoproteins. This Nitrosospira multiformis (strain ATCC 25196 / NCIMB 11849 / C 71) protein is Phosphatidylglycerol--prolipoprotein diacylglyceryl transferase.